The chain runs to 481 residues: Glutamate--tRNA ligase (481 aa).

A 'HIGH' region motif is present at residues 9–19 (PSPTGNLHIGT). Zn(2+) is bound by residues Cys98, Cys100, His125, and Asp127. Residues 248 to 252 (KLSKR) carry the 'KMSKS' region motif. Residue Lys251 coordinates ATP.

Belongs to the class-I aminoacyl-tRNA synthetase family. Glutamate--tRNA ligase type 1 subfamily. Monomer. The cofactor is Zn(2+).

It localises to the cytoplasm. The catalysed reaction is tRNA(Glu) + L-glutamate + ATP = L-glutamyl-tRNA(Glu) + AMP + diphosphate. Its function is as follows. Catalyzes the attachment of glutamate to tRNA(Glu) in a two-step reaction: glutamate is first activated by ATP to form Glu-AMP and then transferred to the acceptor end of tRNA(Glu). In Synechococcus elongatus (strain ATCC 33912 / PCC 7942 / FACHB-805) (Anacystis nidulans R2), this protein is Glutamate--tRNA ligase.